Reading from the N-terminus, the 170-residue chain is Ubiquitin-conjugating enzyme E2 J2-like (170 aa).

The region spanning 15–165 is the UBC core domain; the sequence is DCITRLKREF…NKTFCELFPY (151 aa). Catalysis depends on Cys97, which acts as the Glycyl thioester intermediate.

It belongs to the ubiquitin-conjugating enzyme family.

It catalyses the reaction S-ubiquitinyl-[E1 ubiquitin-activating enzyme]-L-cysteine + [E2 ubiquitin-conjugating enzyme]-L-cysteine = [E1 ubiquitin-activating enzyme]-L-cysteine + S-ubiquitinyl-[E2 ubiquitin-conjugating enzyme]-L-cysteine.. Its pathway is protein modification; protein ubiquitination. Its function is as follows. Catalyzes the covalent attachment of ubiquitin to other proteins. The protein is Ubiquitin-conjugating enzyme E2 J2-like of Dictyostelium discoideum (Social amoeba).